A 438-amino-acid chain; its full sequence is L-cysteine:1D-myo-inositol 2-amino-2-deoxy-alpha-D-glucopyranoside ligase (438 aa).

A disordered region spans residues Met-1–Gly-27. Position 44 (Cys-44) interacts with Zn(2+). Residues Cys-44–Thr-47, Thr-59, and Asn-82–Thr-84 contribute to the L-cysteinyl-5'-AMP site. Positions Ile-46–His-56 match the 'HIGH' region motif. Positions Asp-208–Pro-213 match the 'ERGGDP' region motif. Trp-249 contacts L-cysteinyl-5'-AMP. Cys-253 serves as a coordination point for Zn(2+). Gly-271–Asp-273 contacts L-cysteinyl-5'-AMP. His-278 is a Zn(2+) binding site. Val-304 lines the L-cysteinyl-5'-AMP pocket. Residues Lys-310 to Ser-314 carry the 'KMSKS' region motif.

The protein belongs to the class-I aminoacyl-tRNA synthetase family. MshC subfamily. Monomer. Zn(2+) serves as cofactor.

It carries out the reaction 1D-myo-inositol 2-amino-2-deoxy-alpha-D-glucopyranoside + L-cysteine + ATP = 1D-myo-inositol 2-(L-cysteinylamino)-2-deoxy-alpha-D-glucopyranoside + AMP + diphosphate + H(+). Catalyzes the ATP-dependent condensation of GlcN-Ins and L-cysteine to form L-Cys-GlcN-Ins. In Kocuria rhizophila (strain ATCC 9341 / DSM 348 / NBRC 103217 / DC2201), this protein is L-cysteine:1D-myo-inositol 2-amino-2-deoxy-alpha-D-glucopyranoside ligase.